The following is a 565-amino-acid chain: Phosphomethylpyrimidine synthase (565 aa).

Substrate is bound by residues Asn-203, Met-232, Tyr-261, His-297, 317 to 319, 358 to 361, and Glu-397; these read SRG and DGLR. His-401 is a Zn(2+) binding site. Residue Tyr-424 participates in substrate binding. Residue His-465 participates in Zn(2+) binding. [4Fe-4S] cluster contacts are provided by Cys-541, Cys-544, and Cys-549.

It belongs to the ThiC family. The cofactor is [4Fe-4S] cluster.

It carries out the reaction 5-amino-1-(5-phospho-beta-D-ribosyl)imidazole + S-adenosyl-L-methionine = 4-amino-2-methyl-5-(phosphooxymethyl)pyrimidine + CO + 5'-deoxyadenosine + formate + L-methionine + 3 H(+). It functions in the pathway cofactor biosynthesis; thiamine diphosphate biosynthesis. In terms of biological role, catalyzes the synthesis of the hydroxymethylpyrimidine phosphate (HMP-P) moiety of thiamine from aminoimidazole ribotide (AIR) in a radical S-adenosyl-L-methionine (SAM)-dependent reaction. The protein is Phosphomethylpyrimidine synthase of Bacteroides thetaiotaomicron (strain ATCC 29148 / DSM 2079 / JCM 5827 / CCUG 10774 / NCTC 10582 / VPI-5482 / E50).